The sequence spans 375 residues: Carbamoyl phosphate synthase small chain (375 aa).

The tract at residues 1–185 (MTQPAILVLE…LNANAFVQAE (185 aa)) is CPSase. Positions 47, 237, and 239 each coordinate L-glutamine. In terms of domain architecture, Glutamine amidotransferase type-1 spans 189-375 (KVVAYDYGVK…FVASMAEAKS (187 aa)). C265 (nucleophile) is an active-site residue. Residues L266, Q269, N307, G309, and F310 each coordinate L-glutamine. Catalysis depends on residues H349 and E351.

This sequence belongs to the CarA family. As to quaternary structure, composed of two chains; the small (or glutamine) chain promotes the hydrolysis of glutamine to ammonia, which is used by the large (or ammonia) chain to synthesize carbamoyl phosphate. Tetramer of heterodimers (alpha,beta)4.

It catalyses the reaction hydrogencarbonate + L-glutamine + 2 ATP + H2O = carbamoyl phosphate + L-glutamate + 2 ADP + phosphate + 2 H(+). The enzyme catalyses L-glutamine + H2O = L-glutamate + NH4(+). It participates in amino-acid biosynthesis; L-arginine biosynthesis; carbamoyl phosphate from bicarbonate: step 1/1. It functions in the pathway pyrimidine metabolism; UMP biosynthesis via de novo pathway; (S)-dihydroorotate from bicarbonate: step 1/3. Functionally, small subunit of the glutamine-dependent carbamoyl phosphate synthetase (CPSase). CPSase catalyzes the formation of carbamoyl phosphate from the ammonia moiety of glutamine, carbonate, and phosphate donated by ATP, constituting the first step of 2 biosynthetic pathways, one leading to arginine and/or urea and the other to pyrimidine nucleotides. The small subunit (glutamine amidotransferase) binds and cleaves glutamine to supply the large subunit with the substrate ammonia. In Xanthomonas campestris pv. campestris (strain ATCC 33913 / DSM 3586 / NCPPB 528 / LMG 568 / P 25), this protein is Carbamoyl phosphate synthase small chain.